A 666-amino-acid polypeptide reads, in one-letter code: tRNA 5-methylaminomethyl-2-thiouridine biosynthesis bifunctional protein MnmC (666 aa).

The segment at 1–245 (MKQYAIQPAT…KREMLCGVME (245 aa)) is tRNA (mnm(5)s(2)U34)-methyltransferase. The segment at 270 to 666 (IGGGIASALL…RKLLKGKAVK (397 aa)) is FAD-dependent cmnm(5)s(2)U34 oxidoreductase.

The protein in the N-terminal section; belongs to the methyltransferase superfamily. tRNA (mnm(5)s(2)U34)-methyltransferase family. This sequence in the C-terminal section; belongs to the DAO family. It depends on FAD as a cofactor.

The protein localises to the cytoplasm. The catalysed reaction is 5-aminomethyl-2-thiouridine(34) in tRNA + S-adenosyl-L-methionine = 5-methylaminomethyl-2-thiouridine(34) in tRNA + S-adenosyl-L-homocysteine + H(+). Functionally, catalyzes the last two steps in the biosynthesis of 5-methylaminomethyl-2-thiouridine (mnm(5)s(2)U) at the wobble position (U34) in tRNA. Catalyzes the FAD-dependent demodification of cmnm(5)s(2)U34 to nm(5)s(2)U34, followed by the transfer of a methyl group from S-adenosyl-L-methionine to nm(5)s(2)U34, to form mnm(5)s(2)U34. This is tRNA 5-methylaminomethyl-2-thiouridine biosynthesis bifunctional protein MnmC from Salmonella arizonae (strain ATCC BAA-731 / CDC346-86 / RSK2980).